The sequence spans 200 residues: Snake venom metalloproteinase rhomb-I (200 aa).

The Peptidase M12B domain occupies 4-200; the sequence is KYIELVVVAD…RKPQCILNKP (197 aa). The Ca(2+) site is built by Glu7 and Asp91. Intrachain disulfides connect Cys115/Cys195, Cys155/Cys179, and Cys157/Cys162. His140 contributes to the Zn(2+) binding site. Residue Glu141 is part of the active site. Positions 144 and 150 each coordinate Zn(2+). Cys195 and Asn198 together coordinate Ca(2+).

Monomer. Zn(2+) is required as a cofactor. Expressed by the venom gland.

The protein resides in the secreted. In terms of biological role, snake venom zinc metalloproteinase that induces hemorrhage. This chain is Snake venom metalloproteinase rhomb-I, found in Lachesis muta rhombeata (Bushmaster).